A 478-amino-acid chain; its full sequence is Lactate utilization protein B (478 aa).

2 4Fe-4S ferredoxin-type domains span residues 303–333 (GTEFQSALHCIRCAACINVCPVYRHVGGHAY) and 352–381 (YDDHKELPYASSLCAACTEACPVKIPLHEQ). [4Fe-4S] cluster is bound by residues cysteine 312, cysteine 315, cysteine 318, cysteine 322, cysteine 365, cysteine 368, and cysteine 372.

This sequence belongs to the LutB/YkgF family.

Functionally, is involved in L-lactate degradation and allows cells to grow with lactate as the sole carbon source. Has probably a role as an electron transporter during oxidation of L-lactate. The polypeptide is Lactate utilization protein B (Oceanobacillus iheyensis (strain DSM 14371 / CIP 107618 / JCM 11309 / KCTC 3954 / HTE831)).